Here is a 225-residue protein sequence, read N- to C-terminus: Putative membrane protease YugP (225 aa).

His-95 is a binding site for Zn(2+). The active site involves Glu-96. 2 residues coordinate Zn(2+): His-99 and His-103. Helical transmembrane passes span 116 to 138 (IFPV…MLLG), 140 to 162 (LNLI…ITLP), and 192 to 212 (VLSA…FELL).

The protein localises to the cell membrane. The protein is Putative membrane protease YugP (yugP) of Bacillus subtilis (strain 168).